A 994-amino-acid polypeptide reads, in one-letter code: Translation initiation factor IF-2 (994 aa).

2 stretches are compositionally biased toward polar residues: residues 1 to 10 and 28 to 40; these read MSDENNNGRN and SVSSGTVKQSFSH. A disordered region spans residues 1–405; sequence MSDENNNGRN…REKRKGGAQE (405 aa). The segment covering 76-91 has biased composition (low complexity); it reads PQKPAGPAQAPRAPQG. Over residues 98 to 131 the composition is skewed to basic and acidic residues; that stretch reads AEERAARQRAIELARQQEADRRAREERARAEAEA. The span at 132–146 shows a compositional bias: low complexity; that stretch reads ARAAQQKAAQAAAEP. A compositionally biased stretch (pro residues) spans 147–157; sequence PAAPPPAPAAP. A compositionally biased stretch (low complexity) spans 158–172; that stretch reads PAAAAPAAPAAEAAP. A compositionally biased stretch (pro residues) spans 173–188; it reads APKPAPSPRPVPPSAP. Over residues 189–204 the composition is skewed to low complexity; it reads APQAARPAAEAPPRQA. Basic and acidic residues-rich tracts occupy residues 216–235 and 247–273; these read PDRRDDRPSTTTYRPERPSN and PRRDDDRGPRPPRRDDDRGPRRDDRPQ. Residues 298 to 310 are compositionally biased toward gly residues; that stretch reads RGPGGPRGPGGPR. 2 stretches are compositionally biased toward basic and acidic residues: residues 336–350 and 390–402; these read VDRRPDEDDRRRDPG and RAREREREKRKGG. One can recognise a tr-type G domain in the interval 492-662; sequence PRPPVVAVMG…LLQAEVLDLK (171 aa). Residues 501–508 are G1; the sequence is GHVDHGKT. Residue 501 to 508 coordinates GTP; that stretch reads GHVDHGKT. The tract at residues 526-530 is G2; that stretch reads GITQH. Positions 548 to 551 are G3; sequence DTPG. GTP is bound by residues 548-552 and 602-605; these read DTPGH and NKID. The segment at 602–605 is G4; that stretch reads NKID. The segment at 638–640 is G5; it reads SAT.

Belongs to the TRAFAC class translation factor GTPase superfamily. Classic translation factor GTPase family. IF-2 subfamily.

The protein localises to the cytoplasm. One of the essential components for the initiation of protein synthesis. Protects formylmethionyl-tRNA from spontaneous hydrolysis and promotes its binding to the 30S ribosomal subunits. Also involved in the hydrolysis of GTP during the formation of the 70S ribosomal complex. In Phenylobacterium zucineum (strain HLK1), this protein is Translation initiation factor IF-2.